Reading from the N-terminus, the 210-residue chain is Prolactin (210 aa).

Positions M1–A23 are cleaved as a signal peptide. 2 disulfides stabilise this stretch: C69-C183 and C200-C210.

It belongs to the somatotropin/prolactin family.

It localises to the secreted. The polypeptide is Prolactin (prl) (Oncorhynchus mykiss (Rainbow trout)).